Consider the following 1433-residue polypeptide: Bacillopeptidase F (1433 aa).

An N-terminal signal peptide occupies residues 1–30; that stretch reads MRKKTKNRLISSVLSTVVISSLLFPGAAGA. The propeptide occupies 31–194; the sequence is SSKVTSPSVK…NMKKAQKAIK (164 aa). The region spanning 68 to 177 is the Inhibitor I9 domain; it reads TFLIKFKDLA…KVLPNEKRQL (110 aa). The 313-residue stretch at 200–512 folds into the Peptidase S8 domain; sequence EWNVDQIDAP…HGLVNAFDAV (313 aa). Residues Asp-227, His-274, and Ser-452 each act as charge relay system in the active site. Residues 756–1433 constitute a propeptide that is removed on maturation; that stretch reads SAYKGQNIQV…NGKLNMNTEN (678 aa). The tract at residues 800–830 is disordered; the sequence is KLGVEKPSGKQKKKPVNPKKAKPSANTAVKH. A compositionally biased stretch (basic residues) spans 808–821; the sequence is GKQKKKPVNPKKAK.

It belongs to the peptidase S8 family.

It localises to the secreted. The chain is Bacillopeptidase F (bpr) from Bacillus subtilis (strain 168).